We begin with the raw amino-acid sequence, 284 residues long: Averufin oxidase A (284 aa).

Positions 1–23 are cleaved as a signal peptide; the sequence is MPTYALLGATGATGSAILRCLLA. Residues Asn62, Asn86, and Asn190 are each glycosylated (N-linked (GlcNAc...) asparagine).

It belongs to the avfA family.

It participates in mycotoxin biosynthesis. In terms of biological role, averufin oxidase A; part of the fragmented gene cluster that mediates the biosynthesis of dothistromin (DOTH), a polyketide toxin very similar in structure to the aflatoxin precursor, versicolorin B. The first step of the pathway is the conversion of acetate to norsolorinic acid (NOR) and requires the fatty acid synthase subunits hexA and hexB, as well as the polyketide synthase pksA. PksA combines a hexanoyl starter unit and 7 malonyl-CoA extender units to synthesize the precursor NOR. The hexanoyl starter unit is provided to the acyl-carrier protein (ACP) domain by the fungal fatty acid synthase hexA/hexB. The second step is the conversion of NOR to averantin (AVN) and requires the norsolorinic acid ketoreductase nor1, which catalyzes the dehydration of norsolorinic acid to form (1'S)-averantin. The cytochrome P450 monooxygenase avnA then catalyzes the hydroxylation of AVN to 5'hydroxyaverantin (HAVN). The next step is performed by adhA that transforms HAVN to averufin (AVF). Averufin might then be converted to hydroxyversicolorone by cypX and avfA. Hydroxyversicolorone is further converted versiconal hemiacetal acetate (VHA) by moxY. VHA is then the substrate for the versiconal hemiacetal acetate esterase est1 to yield versiconal (VAL). Versicolorin B synthase vbsA then converts VAL to versicolorin B (VERB) by closing the bisfuran ring. Then, the activity of the versicolorin B desaturase verB leads to versicolorin A (VERA). DotB, a predicted chloroperoxidase, may perform epoxidation of the A-ring of VERA. Alternatively, a cytochrome P450, such as cypX or avnA could catalyze this step. It is also possible that another, uncharacterized, cytochrome P450 enzyme is responsible for this step. Opening of the epoxide could potentially be achieved by the epoxide hydrolase epoA. However, epoA seems not to be required for DOTH biosynthesis, but other epoxide hydrolases may have the ability to complement this hydrolysis. Alternatively, opening of the epoxide ring could be achieved non-enzymatically. The next step is the deoxygenation of ring A to yield the 5,8-dihydroxyanthraquinone which is most likely catalyzed by the NADPH dehydrogenase encoded by ver1. The last stages of DOTH biosynthesis are proposed to involve hydroxylation of the bisfuran. OrdB and norB might have oxidative roles here. An alternative possibility is that cytochrome P450 monoogenases such as avnA and cypX might perform these steps in addition to previously proposed steps. In Dothistroma septosporum (strain NZE10 / CBS 128990) (Red band needle blight fungus), this protein is Averufin oxidase A.